A 22-amino-acid chain; its full sequence is Cytin chain B (22 aa).

It belongs to the protease inhibitor I13 (potato type I serine protease inhibitor) family. In terms of assembly, heterodimer of an A chain and a B chain, linked by a disulfide bond.

Its function is as follows. Inhibitor of chymotrypsin. This Theromyzon tessulatum (Duck leech) protein is Cytin chain B.